The chain runs to 488 residues: Glutamyl-tRNA(Gln) amidotransferase subunit A (488 aa).

Residues lysine 76 and serine 152 each act as charge relay system in the active site. The active-site Acyl-ester intermediate is the serine 176.

Belongs to the amidase family. GatA subfamily. In terms of assembly, heterotrimer of A, B and C subunits.

The enzyme catalyses L-glutamyl-tRNA(Gln) + L-glutamine + ATP + H2O = L-glutaminyl-tRNA(Gln) + L-glutamate + ADP + phosphate + H(+). In terms of biological role, allows the formation of correctly charged Gln-tRNA(Gln) through the transamidation of misacylated Glu-tRNA(Gln) in organisms which lack glutaminyl-tRNA synthetase. The reaction takes place in the presence of glutamine and ATP through an activated gamma-phospho-Glu-tRNA(Gln). The polypeptide is Glutamyl-tRNA(Gln) amidotransferase subunit A (Oceanobacillus iheyensis (strain DSM 14371 / CIP 107618 / JCM 11309 / KCTC 3954 / HTE831)).